A 720-amino-acid polypeptide reads, in one-letter code: GTPase-activating protein gyp2 (720 aa).

The 66-residue stretch at 20–85 folds into the GRAM domain; it reads LDPASFFRIN…AAVRKLEREN (66 aa). Residues 216–404 form the Rab-GAP TBC domain; sequence GIPNNLRADI…RILDCLFVNG (189 aa).

The protein localises to the cytoplasm. The protein resides in the nucleus. In terms of biological role, stimulates specifically the GTPase activity of ypt2 and ryh1. Inactivates ryh1 during recycling between the endosome and the Golgi compartments. The protein is GTPase-activating protein gyp2 of Schizosaccharomyces pombe (strain 972 / ATCC 24843) (Fission yeast).